An 84-amino-acid polypeptide reads, in one-letter code: U4-theraphotoxin-Hhn1a (84 aa).

The signal sequence occupies residues 1–22 (MKVTLIAILTCAAVLVLHTTAA). A propeptide spanning residues 23–47 (EELEESQLMEVGMPDTELEAVDEER) is cleaved from the precursor. Disulfide bonds link Cys-51-Cys-65, Cys-55-Cys-76, and Cys-70-Cys-81.

The protein belongs to the neurotoxin 12 (Hwtx-2) family. 02 (Hwtx-2) subfamily. As to expression, expressed by the venom gland.

The protein localises to the secreted. Postsynaptic neurotoxin. This Cyriopagopus hainanus (Chinese bird spider) protein is U4-theraphotoxin-Hhn1a.